Consider the following 212-residue polypeptide: 3-isopropylmalate dehydratase small subunit (212 aa).

It belongs to the LeuD family. LeuD type 1 subfamily. As to quaternary structure, heterodimer of LeuC and LeuD.

It carries out the reaction (2R,3S)-3-isopropylmalate = (2S)-2-isopropylmalate. It functions in the pathway amino-acid biosynthesis; L-leucine biosynthesis; L-leucine from 3-methyl-2-oxobutanoate: step 2/4. Its function is as follows. Catalyzes the isomerization between 2-isopropylmalate and 3-isopropylmalate, via the formation of 2-isopropylmaleate. The polypeptide is 3-isopropylmalate dehydratase small subunit (Laribacter hongkongensis (strain HLHK9)).